The sequence spans 380 residues: 1-deoxy-D-xylulose 5-phosphate reductoisomerase (380 aa).

The NADPH site is built by Thr-10, Gly-11, Ser-12, Ile-13, Gly-36, Arg-37, Asn-38, and Asn-120. Residue Lys-121 coordinates 1-deoxy-D-xylulose 5-phosphate. Glu-122 contacts NADPH. Asp-146 is a binding site for Mn(2+). 1-deoxy-D-xylulose 5-phosphate contacts are provided by Ser-147, Glu-148, Ser-172, and His-195. Mn(2+) is bound at residue Glu-148. Gly-201 provides a ligand contact to NADPH. The 1-deoxy-D-xylulose 5-phosphate site is built by Ser-208, Asn-213, Lys-214, and Glu-217. A Mn(2+)-binding site is contributed by Glu-217.

The protein belongs to the DXR family. The cofactor is Mg(2+). Mn(2+) is required as a cofactor.

The enzyme catalyses 2-C-methyl-D-erythritol 4-phosphate + NADP(+) = 1-deoxy-D-xylulose 5-phosphate + NADPH + H(+). It participates in isoprenoid biosynthesis; isopentenyl diphosphate biosynthesis via DXP pathway; isopentenyl diphosphate from 1-deoxy-D-xylulose 5-phosphate: step 1/6. In terms of biological role, catalyzes the NADPH-dependent rearrangement and reduction of 1-deoxy-D-xylulose-5-phosphate (DXP) to 2-C-methyl-D-erythritol 4-phosphate (MEP). This Listeria welshimeri serovar 6b (strain ATCC 35897 / DSM 20650 / CCUG 15529 / CIP 8149 / NCTC 11857 / SLCC 5334 / V8) protein is 1-deoxy-D-xylulose 5-phosphate reductoisomerase.